We begin with the raw amino-acid sequence, 115 residues long: MIIGIGVDVCDISRWEAAVQRHPGMVRKMLTHTEAVMPARSQAARFAAKEALYKALGGGEGLSWQDCEVVTDGEAVRFELRGSLARRAEELGVRRVHLSLTHDAGVAVAMVVCEG.

The Mg(2+) site is built by Asp8 and Glu50.

This sequence belongs to the P-Pant transferase superfamily. AcpS family. Requires Mg(2+) as cofactor.

The protein resides in the cytoplasm. It catalyses the reaction apo-[ACP] + CoA = holo-[ACP] + adenosine 3',5'-bisphosphate + H(+). Its function is as follows. Transfers the 4'-phosphopantetheine moiety from coenzyme A to a Ser of acyl-carrier-protein. The polypeptide is Holo-[acyl-carrier-protein] synthase (Cutibacterium acnes (strain DSM 16379 / KPA171202) (Propionibacterium acnes)).